Here is a 154-residue protein sequence, read N- to C-terminus: Transcriptional repressor NrdR (154 aa).

A zinc finger spans residues C3 to C34. The region spanning P49 to E139 is the ATP-cone domain.

The protein belongs to the NrdR family. Requires Zn(2+) as cofactor.

Negatively regulates transcription of bacterial ribonucleotide reductase nrd genes and operons by binding to NrdR-boxes. This is Transcriptional repressor NrdR from Pseudomonas fluorescens (strain ATCC BAA-477 / NRRL B-23932 / Pf-5).